A 121-amino-acid polypeptide reads, in one-letter code: Flagellar protein FliT (121 aa).

A required for homodimerization region spans residues 1–50 (MNNAPHLYFAWQQLVEKSQLMLRLATEEQWDELIASEMAYVNAVQEIAHL). The tract at residues 60-98 (MQEQLRPMLRLILDNESKVKQLLQIRMDELAKLVGQSSV) is fliD binding.

Belongs to the FliT family. Homodimer. Interacts with FliD and FlhC.

The protein resides in the cytoplasm. The protein localises to the cytosol. Functionally, dual-function protein that regulates the transcription of class 2 flagellar operons and that also acts as an export chaperone for the filament-capping protein FliD. As a transcriptional regulator, acts as an anti-FlhDC factor; it directly binds FlhC, thus inhibiting the binding of the FlhC/FlhD complex to class 2 promoters, resulting in decreased expression of class 2 flagellar operons. As a chaperone, effects FliD transition to the membrane by preventing its premature polymerization, and by directing it to the export apparatus. The chain is Flagellar protein FliT from Escherichia coli O9:H4 (strain HS).